The primary structure comprises 686 residues: Mannan-binding lectin serine protease 2 (686 aa).

The signal sequence occupies residues 1–15 (MRLLTLLGLLCGSVA). The region spanning 16–137 (TPLGPKWPEP…TGFEAFYAAE (122 aa)) is the CUB 1 domain. Residues E67, D75, D120, S122, N123, D138, I139, and E141 each coordinate Ca(2+). C72 and C90 form a disulfide bridge. The 44-residue stretch at 138–181 (DIDECQVAPGEAPTCDHHCHNHLGGFYCSCRAGYVLHRNKRTCS) folds into the EGF-like; calcium-binding domain. Disulfide bonds link C142–C156, C152–C165, C167–C180, C184–C211, C241–C259, C300–C348, C328–C361, C366–C412, C396–C430, C434–C552, C598–C618, and C629–C660. Residues N158, H159, and G162 each coordinate Ca(2+). N158 carries the (3R)-3-hydroxyasparagine modification. The region spanning 184–296 (CSGQVFTQRS…TGWKIHYTST (113 aa)) is the CUB 2 domain. 2 consecutive Sushi domains span residues 298–363 (QPCP…ACSI) and 364–432 (VDCG…VCEP). One can recognise a Peptidase S1 domain in the interval 445–684 (IYGGQKAKPG…YIPWIENIIS (240 aa)). Active-site charge relay system residues include H483 and D532. S633 (charge relay system) is an active-site residue.

Belongs to the peptidase S1 family. As to quaternary structure, homodimer; disulfide-linked. Binds MBL2. Isoform 2 binds to MASP1. Binds SERPING1. Dimerization and MBL2 binding requires calcium ions. The iron and 2-oxoglutarate dependent 3-hydroxylation of aspartate and asparagine is (R) stereospecific within EGF domains. In terms of processing, activated by cleavage after Arg-444. The uncleaved zymogen is inactive towards synthetic substrates, but has sufficient activity to effect autocatalytic cleavage. In terms of tissue distribution, plasma.

It is found in the secreted. It carries out the reaction Selective cleavage after Arg-223 in complement component C2 (-Ser-Leu-Gly-Arg-|-Lys-Ile-Gln-Ile) and after Arg-76 in complement component C4 (-Gly-Leu-Gln-Arg-|-Ala-Leu-Glu-Ile).. In terms of biological role, serum protease that plays an important role in the activation of the complement system via mannose-binding lectin. After activation by auto-catalytic cleavage it cleaves C2 and C4, leading to their activation and to the formation of C3 convertase. The protein is Mannan-binding lectin serine protease 2 (MASP2) of Homo sapiens (Human).